The primary structure comprises 346 residues: NADH-quinone oxidoreductase subunit H 2 (346 aa).

The next 8 helical transmembrane spans lie at 14-34 (IAMV…VAYA), 83-103 (FAFL…FAVI), 136-156 (VGVL…VLAG), 172-192 (SAQM…VFML), 208-228 (GAWY…CSIA), 260-280 (FFMA…TLFL), 289-309 (LPGW…CMWI), and 324-344 (LGWK…GIIV).

Belongs to the complex I subunit 1 family. As to quaternary structure, NDH-1 is composed of 14 different subunits. Subunits NuoA, H, J, K, L, M, N constitute the membrane sector of the complex.

Its subcellular location is the cell inner membrane. It catalyses the reaction a quinone + NADH + 5 H(+)(in) = a quinol + NAD(+) + 4 H(+)(out). In terms of biological role, NDH-1 shuttles electrons from NADH, via FMN and iron-sulfur (Fe-S) centers, to quinones in the respiratory chain. The immediate electron acceptor for the enzyme in this species is believed to be ubiquinone. Couples the redox reaction to proton translocation (for every two electrons transferred, four hydrogen ions are translocated across the cytoplasmic membrane), and thus conserves the redox energy in a proton gradient. This subunit may bind ubiquinone. In Geobacter metallireducens (strain ATCC 53774 / DSM 7210 / GS-15), this protein is NADH-quinone oxidoreductase subunit H 2.